A 435-amino-acid chain; its full sequence is Serine/threonine-protein kinase 40 (435 aa).

The Protein kinase domain occupies 35 to 332; that stretch reads FILGPRLGNS…DVLEALSAII (298 aa). Residues 41–49 and lysine 66 each bind ATP; that span reads LGNSPVPSI. The active-site Proton acceptor is aspartate 197.

It belongs to the protein kinase superfamily. CAMK Ser/Thr protein kinase family.

The protein resides in the nucleus. It localises to the cytoplasm. The enzyme catalyses L-seryl-[protein] + ATP = O-phospho-L-seryl-[protein] + ADP + H(+). The catalysed reaction is L-threonyl-[protein] + ATP = O-phospho-L-threonyl-[protein] + ADP + H(+). May be a negative regulator of NF-kappa-B and p53-mediated gene transcription. The sequence is that of Serine/threonine-protein kinase 40 (Stk40) from Rattus norvegicus (Rat).